The primary structure comprises 459 residues: Glycosyl hydrolase family 109 protein 1 (459 aa).

Positions 1-31 form a signal peptide, tat-type signal; the sequence is MHNIHRRHFLKAAGAVTAGLVTANIALNANA. NAD(+)-binding positions include 64–65, D86, 135–138, 155–156, and N184; these read ER, WEWH, and EV. Residues Y213, R232, 244–247, and Y326 contribute to the substrate site; that span reads YPTH. NAD(+) is bound at residue Y244.

It belongs to the Gfo/Idh/MocA family. Glycosyl hydrolase 109 subfamily. Requires NAD(+) as cofactor. Post-translationally, predicted to be exported by the Tat system. The position of the signal peptide cleavage has not been experimentally proven.

In terms of biological role, glycosidase. The protein is Glycosyl hydrolase family 109 protein 1 of Shewanella sp. (strain MR-4).